Reading from the N-terminus, the 228-residue chain is Putative lipoprotein LprH (228 aa).

The first 27 residues, 1–27 (MACLGRPGCRGWAGASLVLVVVLALAA), serve as a signal peptide directing secretion. Residue cysteine 28 is the site of N-palmitoyl cysteine attachment. The S-diacylglycerol cysteine moiety is linked to residue cysteine 28. A helical transmembrane segment spans residues 191-211 (GLAVVPHAVLVLSACGFKPGF).

It localises to the cell membrane. This is Putative lipoprotein LprH (lprH) from Mycobacterium bovis (strain ATCC BAA-935 / AF2122/97).